Consider the following 480-residue polypeptide: 2-succinylbenzoate--CoA ligase (480 aa).

This sequence belongs to the ATP-dependent AMP-binding enzyme family. MenE subfamily.

It catalyses the reaction 2-succinylbenzoate + ATP + CoA = 2-succinylbenzoyl-CoA + AMP + diphosphate. It functions in the pathway quinol/quinone metabolism; 1,4-dihydroxy-2-naphthoate biosynthesis; 1,4-dihydroxy-2-naphthoate from chorismate: step 5/7. The protein operates within quinol/quinone metabolism; menaquinone biosynthesis. In terms of biological role, converts 2-succinylbenzoate (OSB) to 2-succinylbenzoyl-CoA (OSB-CoA). This is 2-succinylbenzoate--CoA ligase from Oceanobacillus iheyensis (strain DSM 14371 / CIP 107618 / JCM 11309 / KCTC 3954 / HTE831).